A 224-amino-acid chain; its full sequence is Protein GrpE (224 aa).

2 stretches are compositionally biased toward polar residues: residues 1–16 (MSGD…NVES) and 209–224 (ESSS…EGDA). Disordered regions lie at residues 1-35 (MSGD…DPVV) and 203-224 (SMGP…EGDA).

Belongs to the GrpE family. As to quaternary structure, homodimer.

It is found in the cytoplasm. Participates actively in the response to hyperosmotic and heat shock by preventing the aggregation of stress-denatured proteins, in association with DnaK and GrpE. It is the nucleotide exchange factor for DnaK and may function as a thermosensor. Unfolded proteins bind initially to DnaJ; upon interaction with the DnaJ-bound protein, DnaK hydrolyzes its bound ATP, resulting in the formation of a stable complex. GrpE releases ADP from DnaK; ATP binding to DnaK triggers the release of the substrate protein, thus completing the reaction cycle. Several rounds of ATP-dependent interactions between DnaJ, DnaK and GrpE are required for fully efficient folding. The polypeptide is Protein GrpE (Synechococcus sp. (strain CC9902)).